Consider the following 625-residue polypeptide: Interleukin-1 receptor-associated kinase-like 2 (625 aa).

Positions 13–94 (LDDLCRNMDA…RAAQIILNWK (82 aa)) constitute a Death domain. A disordered region spans residues 111 to 181 (KPEKPLAASV…SSDSKDFSTS (71 aa)). Phosphoserine is present on Ser-144. A compositionally biased stretch (polar residues) spans 169 to 181 (LPTSSDSKDFSTS). Residues 210–489 (FNQNRKISQG…LCLRRRNTSL (280 aa)) form the Protein kinase domain. ATP contacts are provided by residues 216–224 (ISQGTFADV), Lys-237, and 337–340 (KSSN). Residues 510–540 (LPWSGLSEGTGSSSNTPEETDDVDNSSLDAS) form a disordered region. A compositionally biased stretch (polar residues) spans 516 to 526 (SEGTGSSSNTP).

The protein belongs to the protein kinase superfamily. TKL Ser/Thr protein kinase family. Pelle subfamily. In terms of assembly, interacts with MYD88. IL-1 stimulation leads to the formation of a signaling complex which dissociates from the IL-1 receptor following the binding of PELI1. Expressed in spleen, thymus, prostate, lung, liver, skeletal muscle, kidney, pancreas and peripheral blood leukocytes.

Its function is as follows. Binds to the IL-1 type I receptor following IL-1 engagement, triggering intracellular signaling cascades leading to transcriptional up-regulation and mRNA stabilization. The chain is Interleukin-1 receptor-associated kinase-like 2 (IRAK2) from Homo sapiens (Human).